Reading from the N-terminus, the 156-residue chain is Small ribosomal subunit protein uS7 (156 aa).

It belongs to the universal ribosomal protein uS7 family. In terms of assembly, part of the 30S ribosomal subunit. Contacts proteins S9 and S11.

Functionally, one of the primary rRNA binding proteins, it binds directly to 16S rRNA where it nucleates assembly of the head domain of the 30S subunit. Is located at the subunit interface close to the decoding center, probably blocks exit of the E-site tRNA. This chain is Small ribosomal subunit protein uS7, found in Acholeplasma laidlawii (strain PG-8A).